Reading from the N-terminus, the 506-residue chain is Anaerobic nitric oxide reductase transcription regulator NorR (506 aa).

Aspartate 57 carries the post-translational modification 4-aspartylphosphate. Positions 187 to 416 constitute a Sigma-54 factor interaction domain; the sequence is MIGLSPAMTQ…LEHAIHRAVV (230 aa). ATP-binding positions include 215 to 222 and 278 to 287; these read GETGTGKE and ADNGTLFLDE. Positions 481 to 500 form a DNA-binding region, H-T-H motif; that stretch reads WAASARALETDVANLHRLAK.

Its pathway is nitrogen metabolism; nitric oxide reduction. Functionally, required for the expression of anaerobic nitric oxide (NO) reductase, acts as a transcriptional activator for at least the norVW operon. Activation also requires sigma-54. This chain is Anaerobic nitric oxide reductase transcription regulator NorR, found in Salmonella agona (strain SL483).